A 90-amino-acid polypeptide reads, in one-letter code: Probable Fe(2+)-trafficking protein (90 aa).

It belongs to the Fe(2+)-trafficking protein family.

Functionally, could be a mediator in iron transactions between iron acquisition and iron-requiring processes, such as synthesis and/or repair of Fe-S clusters in biosynthetic enzymes. The sequence is that of Probable Fe(2+)-trafficking protein from Stutzerimonas stutzeri (strain A1501) (Pseudomonas stutzeri).